The chain runs to 311 residues: Glutaminase (311 aa).

Positions 69, 120, 164, 171, 195, 247, and 265 each coordinate substrate.

Belongs to the glutaminase family. As to quaternary structure, homotetramer.

It carries out the reaction L-glutamine + H2O = L-glutamate + NH4(+). This is Glutaminase from Colwellia psychrerythraea (strain 34H / ATCC BAA-681) (Vibrio psychroerythus).